The sequence spans 256 residues: MVEIHDSRMDRGAGAVRLQKILSRAGIASRRAAEKLIIEGRVEVDGQLVRELGTRVDPDVSVVRVDGVKVVVDDSLVYLALNKPRGMYSTMSDDRGRPCVGDLIERRVRGNKKLFHVGRLDADTEGLILLTNDGELAHRLMHPSHEVSKTYLATVKGAVPRGLGKKLSVGLELDDGPAHVDDFAVVDAIPGKTLVRLTLHEGRKRIVRRLLTAAGFPVEMLVRTDIGAVSLGDQRPGCLRALLRDEIRQLYKEVGL.

An S4 RNA-binding domain is found at 16–83 (VRLQKILSRA…DSLVYLALNK (68 aa)). The active-site Nucleophile is D121.

The protein belongs to the pseudouridine synthase RsuA family.

It carries out the reaction a uridine in RNA = a pseudouridine in RNA. This is an uncharacterized protein from Mycobacterium leprae (strain TN).